Here is a 324-residue protein sequence, read N- to C-terminus: tRNA dimethylallyltransferase (324 aa).

Residue 17–24 (GPTASGKT) participates in ATP binding. Position 19–24 (19–24 (TASGKT)) interacts with substrate. Interaction with substrate tRNA stretches follow at residues 42–45 (DSAL), 166–170 (QRIQR), 251–256 (RCVGYR), and 284–291 (KRQITWLR).

This sequence belongs to the IPP transferase family. As to quaternary structure, monomer. Mg(2+) is required as a cofactor.

The catalysed reaction is adenosine(37) in tRNA + dimethylallyl diphosphate = N(6)-dimethylallyladenosine(37) in tRNA + diphosphate. Its function is as follows. Catalyzes the transfer of a dimethylallyl group onto the adenine at position 37 in tRNAs that read codons beginning with uridine, leading to the formation of N6-(dimethylallyl)adenosine (i(6)A). This is tRNA dimethylallyltransferase from Burkholderia vietnamiensis (strain G4 / LMG 22486) (Burkholderia cepacia (strain R1808)).